We begin with the raw amino-acid sequence, 595 residues long: Actin-histidine N-methyltransferase (595 aa).

The interval 1 to 22 (MGKKSRVKTQKSGTGATATVSP) is disordered. The segment covering 10-20 (QKSGTGATATV) has biased composition (polar residues). S-adenosyl-L-methionine-binding positions include Arg-75, 104–106 (EGF), Arg-254, 275–279 (DMCNH), and 325–327 (SGF). One can recognise an SET domain in the interval 94–314 (EGFEMVNFKE…AGEQIYIFYG (221 aa)). Residue Ser-513 is modified to Phosphoserine. Polar residues predominate over residues 549-563 (ENGLVNGENSIPNGT). A disordered region spans residues 549–595 (ENGLVNGENSIPNGTRSEDENLNQEESKRAVEDAKGSSSDRADAVKE). Over residues 573–595 (EESKRAVEDAKGSSSDRADAVKE) the composition is skewed to basic and acidic residues.

The protein belongs to the class V-like SAM-binding methyltransferase superfamily. SETD3 actin-histidine methyltransferase family. As to quaternary structure, interacts with MYOD1. In terms of processing, phosphorylated by GSK3B, which is required for recognition by the SCF(FBXW7) complex and subsequent degradation. Post-translationally, ubiquitinated by the SCF(FBXW7) complex following phosphorylation by GSK3B, leading to its degradation by the proteasome.

The protein localises to the cytoplasm. It is found in the nucleus. The enzyme catalyses L-histidyl-[protein] + S-adenosyl-L-methionine = N(tele)-methyl-L-histidyl-[protein] + S-adenosyl-L-homocysteine + H(+). Functionally, protein-histidine N-methyltransferase that specifically mediates 3-methylhistidine (tele-methylhistidine) methylation of actin at 'His-73'. Histidine methylation of actin is required for smooth muscle contraction of the laboring uterus during delivery. Does not have protein-lysine N-methyltransferase activity and probably only catalyzes histidine methylation of actin. The protein is Actin-histidine N-methyltransferase of Callithrix jacchus (White-tufted-ear marmoset).